A 616-amino-acid polypeptide reads, in one-letter code: Proline--tRNA ligase (616 aa).

The protein belongs to the class-II aminoacyl-tRNA synthetase family. ProS type 1 subfamily. In terms of assembly, homodimer.

Its subcellular location is the cytoplasm. The enzyme catalyses tRNA(Pro) + L-proline + ATP = L-prolyl-tRNA(Pro) + AMP + diphosphate. Functionally, catalyzes the attachment of proline to tRNA(Pro) in a two-step reaction: proline is first activated by ATP to form Pro-AMP and then transferred to the acceptor end of tRNA(Pro). As ProRS can inadvertently accommodate and process non-cognate amino acids such as alanine and cysteine, to avoid such errors it has two additional distinct editing activities against alanine. One activity is designated as 'pretransfer' editing and involves the tRNA(Pro)-independent hydrolysis of activated Ala-AMP. The other activity is designated 'posttransfer' editing and involves deacylation of mischarged Ala-tRNA(Pro). The misacylated Cys-tRNA(Pro) is not edited by ProRS. In Lactococcus lactis subsp. lactis (strain IL1403) (Streptococcus lactis), this protein is Proline--tRNA ligase.